The following is a 367-amino-acid chain: Palmitoyltransferase ZDHHC2 (367 aa).

Over 1-16 the chain is Cytoplasmic; it reads MAPSGPGSSARRRCRR. A helical membrane pass occupies residues 17–37; sequence VLYWIPVVFITLLLGWSYYAY. Residues 38-54 are Lumenal-facing; the sequence is AIQLCIVSMENTGEQVV. The helical transmembrane segment at 55 to 75 threads the bilayer; it reads CLMAYHLLFAMFVWSYWKTIF. Topologically, residues 76–170 are cytoplasmic; it reads TLPMNPSKEF…NNCVGFSNYK (95 aa). One can recognise a DHHC domain in the interval 127–177; it reads RYCDRCQLIKPDRCHHCSVCDKCILKMDHHCPWVNNCVGFSNYKFFLLFLA. The active-site S-palmitoyl cysteine intermediate is C157. Residues 171 to 191 form a helical membrane-spanning segment; it reads FFLLFLAYSLLYCLFIAATDL. Topologically, residues 192–208 are lumenal; the sequence is QYFIKFWTNGLPDTQAK. Residues 209–229 traverse the membrane as a helical segment; it reads FHIMFLFFAAAMFSVSLSSLF. The Cytoplasmic portion of the chain corresponds to 230–367; it reads GYHCWLVSKN…NPALTMENET (138 aa). A mediates localization to plasma membrane and recycling endosomes region spans residues 299-367; sequence NQDPEQASTP…NPALTMENET (69 aa). The disordered stretch occupies residues 330–367; that stretch reads ESQSHLLTDSQSWTESSINPGKCKAGMSNPALTMENET. The span at 333–348 shows a compositional bias: polar residues; that stretch reads SHLLTDSQSWTESSIN. A Non-canonical dileucine endocytic signal motif is present at residues 335-336; the sequence is LL. S341 is subject to Phosphoserine. An NPxY-like endocytic signal motif is present at residues 358-361; sequence NPAL.

Belongs to the DHHC palmitoyltransferase family. As to quaternary structure, monomer. Homodimer. The monomeric form has a higher catalytic activity. Post-translationally, autopalmitoylated. Ubiquitously expressed. Reduced expression in colorectal cancers with liver metastasis.

Its subcellular location is the postsynaptic density. It localises to the postsynaptic recycling endosome membrane. It is found in the cell membrane. The protein localises to the endoplasmic reticulum membrane. The protein resides in the golgi apparatus membrane. It catalyses the reaction L-cysteinyl-[protein] + hexadecanoyl-CoA = S-hexadecanoyl-L-cysteinyl-[protein] + CoA. The catalysed reaction is L-cysteinyl-[protein] + tetradecanoyl-CoA = S-tetradecanoyl-L-cysteinyl-[protein] + CoA. The enzyme catalyses L-cysteinyl-[protein] + octadecanoyl-CoA = S-octadecanoyl-L-cysteinyl-[protein] + CoA. In terms of biological role, palmitoyltransferase that catalyzes the addition of palmitate onto various protein substrates and is involved in a variety of cellular processes. Has no stringent fatty acid selectivity and in addition to palmitate can also transfer onto target proteins myristate from tetradecanoyl-CoA and stearate from octadecanoyl-CoA. In the nervous system, plays a role in long term synaptic potentiation by palmitoylating AKAP5 through which it regulates protein trafficking from the dendritic recycling endosomes to the plasma membrane and controls both structural and functional plasticity at excitatory synapses. In dendrites, mediates the palmitoylation of DLG4 when synaptic activity decreases and induces synaptic clustering of DLG4 and associated AMPA-type glutamate receptors. Also mediates the de novo and turnover palmitoylation of RGS7BP, a shuttle for Gi/o-specific GTPase-activating proteins/GAPs, promoting its localization to the plasma membrane in response to the activation of G protein-coupled receptors. Through the localization of these GTPase-activating proteins/GAPs, it also probably plays a role in G protein-coupled receptors signaling in neurons. Also probably plays a role in cell adhesion by palmitoylating CD9 and CD151 to regulate their expression and function. Palmitoylates the endoplasmic reticulum protein CKAP4 and regulates its localization to the plasma membrane. Could also palmitoylate LCK and regulate its localization to the plasma membrane. Its function is as follows. (Microbial infection) Promotes Chikungunya virus (CHIKV) replication by mediating viral nsp1 palmitoylation. The sequence is that of Palmitoyltransferase ZDHHC2 from Homo sapiens (Human).